A 224-amino-acid chain; its full sequence is Cytidylate kinase (224 aa).

9-17 is an ATP binding site; the sequence is GPSGVGKGT.

Belongs to the cytidylate kinase family. Type 1 subfamily.

The protein resides in the cytoplasm. The catalysed reaction is CMP + ATP = CDP + ADP. It carries out the reaction dCMP + ATP = dCDP + ADP. The polypeptide is Cytidylate kinase (Dichelobacter nodosus (strain VCS1703A)).